Consider the following 475-residue polypeptide: Putative histidine permease (475 aa).

12 helical membrane-spanning segments follow: residues 20–40, 44–64, 87–107, 127–147, 162–182, 199–219, 246–266, 277–297, 341–361, 363–383, 410–430, and 434–454; these read LFMISLGGVIGTGLFLSTGYT, AGPGGTILAYVIGGLMMYLVM, FIGPSTGFMVGIMYWINWVVT, SVWMWSAIFAALLFICNAFSV, IVTIILFIILGGAAMFGLISL, GLFPNGFLAVFIAMISVSFAF, VAWRTVIFFIGAVFILSGLIS, FVAVFAEIGIPYAADIMNFVI, ALMISMAVSCLSLVSSIVAPG, VYVVMVAIAGFAGVVVWMSIA, YPLMPIAALLLCSASCIGLAF, and QRIALFCGVPCIILCYLIYHF.

Belongs to the amino acid-polyamine-organocation (APC) superfamily.

Its subcellular location is the cell membrane. The sequence is that of Putative histidine permease (hutM) from Bacillus subtilis (strain 168).